We begin with the raw amino-acid sequence, 549 residues long: Tight junction-associated protein 1 (549 aa).

Positions 1–34 (MSSAAPAKKPYRKAPPEHRELRLEIPVSRLEQEE) are disordered. Positions 14-23 (APPEHRELRL) are enriched in basic and acidic residues. The stretch at 42–171 (MKLLQQENEE…EELNERYRLD (130 aa)) forms a coiled coil. Disordered stretches follow at residues 207–226 (RSGQEVASPSPSPSSSLSPG) and 266–322 (VDMS…PLYP). Ser-295 bears the Phosphoserine mark. Positions 311–320 (YPTPSPPHPL) are enriched in pro residues. Thr-313 carries the post-translational modification Phosphothreonine. A phosphoserine mark is found at Ser-315 and Ser-340. Disordered regions lie at residues 359-404 (EDGS…SEED), 410-429 (QRAFVDRTPPPAAVVQRTAF), and 434-549 (LPEL…TVLS). The span at 369-383 (SVPSSPASAQGSPHH) shows a compositional bias: polar residues. Positions 389 to 400 (PSALSAPASSAS) are enriched in low complexity. Residue Thr-417 is modified to Phosphothreonine. The residue at position 483 (Ser-483) is a Phosphoserine. Over residues 485–498 (EEERQSLLPDKEGT) the composition is skewed to basic and acidic residues. Basic residues predominate over residues 522–534 (RSPKRMGVHHLHR). Ser-537 bears the Phosphoserine mark. The span at 538–549 (LTQAQEQGTVLS) shows a compositional bias: polar residues.

Interacts with DLG1. Interacts with ARF6 (GTP-bound form). Widely expressed including in adult thymus, heart, lung, liver, small intestine, kidney, spleen, testis and skeletal muscle and in embryonic brain but not detected in adult brain (at protein level).

The protein resides in the golgi apparatus. The protein localises to the trans-Golgi network. It localises to the cell junction. Its subcellular location is the tight junction. It is found in the cell membrane. Its function is as follows. Plays a role in regulating the structure of the Golgi apparatus. This Mus musculus (Mouse) protein is Tight junction-associated protein 1.